Consider the following 182-residue polypeptide: Adenine phosphoribosyltransferase (182 aa).

Belongs to the purine/pyrimidine phosphoribosyltransferase family. Homodimer.

The protein resides in the cytoplasm. The enzyme catalyses AMP + diphosphate = 5-phospho-alpha-D-ribose 1-diphosphate + adenine. Its pathway is purine metabolism; AMP biosynthesis via salvage pathway; AMP from adenine: step 1/1. In terms of biological role, catalyzes a salvage reaction resulting in the formation of AMP, that is energically less costly than de novo synthesis. The protein is Adenine phosphoribosyltransferase of Campylobacter fetus subsp. fetus (strain 82-40).